Consider the following 287-residue polypeptide: Ribosomal RNA small subunit methyltransferase A (287 aa).

S-adenosyl-L-methionine is bound by residues asparagine 28, leucine 30, glycine 55, glutamate 76, aspartate 101, and asparagine 125.

Belongs to the class I-like SAM-binding methyltransferase superfamily. rRNA adenine N(6)-methyltransferase family. RsmA subfamily.

It is found in the cytoplasm. It catalyses the reaction adenosine(1518)/adenosine(1519) in 16S rRNA + 4 S-adenosyl-L-methionine = N(6)-dimethyladenosine(1518)/N(6)-dimethyladenosine(1519) in 16S rRNA + 4 S-adenosyl-L-homocysteine + 4 H(+). Specifically dimethylates two adjacent adenosines (A1518 and A1519) in the loop of a conserved hairpin near the 3'-end of 16S rRNA in the 30S particle. May play a critical role in biogenesis of 30S subunits. The polypeptide is Ribosomal RNA small subunit methyltransferase A (Alkaliphilus metalliredigens (strain QYMF)).